The sequence spans 33 residues: Alpha-amanitin proprotein 2 (33 aa).

Positions 1–10 are excised as a propeptide; that stretch reads MSDINATRLP. Position 11 is a (3R,4R)-4,5-dihydroxyisoleucine; in form alpha-amanitin (isoleucine 11). Residue isoleucine 11 is modified to (3R,4S)-4-hydroxyisoleucine; in form gamma-amanitin. Residues 11-18 constitute a cross-link (cyclopeptide (Ile-Pro)); it reads IWGIGCNP. A cross-link (2'-cysteinyl-6'-hydroxytryptophan sulfoxide (Trp-Cys)) is located at residues 12-16; that stretch reads WGIGC. Proline 18 bears the 4-hydroxyproline mark. Positions 19–33 are excised as a propeptide; it reads CVGDDVTSVLTRGEA.

This sequence belongs to the MSDIN fungal toxin family. Processed by the macrocyclase-peptidase enzyme POPB to yield a toxic cyclic octapeptide. POPB first removes 10 residues from the N-terminus. Conformational trapping of the remaining peptide forces the enzyme to release this intermediate rather than proceed to macrocyclization. The enzyme rebinds the remaining peptide in a different conformation and catalyzes macrocyclization of the N-terminal 8 residues. Expressed in basidiocarps.

Its function is as follows. Major toxin belonging to the bicyclic octapeptides amatoxins that acts by binding non-competitively to RNA polymerase II and greatly slowing the elongation of transcripts from target promoters. This is Alpha-amanitin proprotein 2 from Amanita exitialis (Guangzhou destroying angel).